Reading from the N-terminus, the 363-residue chain is Chorismate synthase (363 aa).

Residues Arg48 and Arg54 each contribute to the NADP(+) site. FMN contacts are provided by residues 125–127 (RSS), 237–238 (NA), Gly277, 292–296 (KPTSS), and Arg318.

The protein belongs to the chorismate synthase family. As to quaternary structure, homotetramer. Requires FMNH2 as cofactor.

It carries out the reaction 5-O-(1-carboxyvinyl)-3-phosphoshikimate = chorismate + phosphate. Its pathway is metabolic intermediate biosynthesis; chorismate biosynthesis; chorismate from D-erythrose 4-phosphate and phosphoenolpyruvate: step 7/7. Catalyzes the anti-1,4-elimination of the C-3 phosphate and the C-6 proR hydrogen from 5-enolpyruvylshikimate-3-phosphate (EPSP) to yield chorismate, which is the branch point compound that serves as the starting substrate for the three terminal pathways of aromatic amino acid biosynthesis. This reaction introduces a second double bond into the aromatic ring system. The polypeptide is Chorismate synthase (Stutzerimonas stutzeri (strain A1501) (Pseudomonas stutzeri)).